A 418-amino-acid chain; its full sequence is MTRRYLFTSESVTEGHPDKICDQISDTILDALLSQDPYSRVAAEVVVNTGLVLITGEITSKAQVNYVDLARQKIAEIGYTDSNNGFSANSCAVLVALDEQSPDISQGVTKAQERREQLSDDELDHIGAGDQGLMFGFACNETPELMPMPISLAHRIARRLAAVRKTGELPYLRPDGKTQVSVIYEDGKPVGIDTILISTQHTETLGQITDNAAIQKTIKDALWQAVVTPSFGDIEIKPDNNTKFLVNPTGKFVIGGPQGDSGLTGRKIIVDTYGGYSRHGGGAFSGKDPTKVDRSAAYACRHVAKNIVAAGLADKCEVQVSYAIGVARPVSIMIETFGTGKVSEEKLLEFVKEHFELRPAGIIQAYNLRHIPQERGRFYQDVAAYGHFGRTDLDLPWEKTDKVALLKDAFSQPAIVAG.

Histidine 16 contacts ATP. Aspartate 18 contacts Mg(2+). Position 44 (glutamate 44) interacts with K(+). Residues glutamate 57 and glutamine 100 each coordinate L-methionine. The tract at residues 100–110 (QSPDISQGVTK) is flexible loop. ATP is bound by residues 175–177 (DGK), 251–252 (KF), aspartate 260, 266–267 (RK), alanine 283, and lysine 287. Aspartate 260 provides a ligand contact to L-methionine. An L-methionine-binding site is contributed by lysine 291.

It belongs to the AdoMet synthase family. Homotetramer; dimer of dimers. The cofactor is Mg(2+). It depends on K(+) as a cofactor.

It localises to the cytoplasm. It carries out the reaction L-methionine + ATP + H2O = S-adenosyl-L-methionine + phosphate + diphosphate. Its pathway is amino-acid biosynthesis; S-adenosyl-L-methionine biosynthesis; S-adenosyl-L-methionine from L-methionine: step 1/1. Functionally, catalyzes the formation of S-adenosylmethionine (AdoMet) from methionine and ATP. The overall synthetic reaction is composed of two sequential steps, AdoMet formation and the subsequent tripolyphosphate hydrolysis which occurs prior to release of AdoMet from the enzyme. This chain is S-adenosylmethionine synthase, found in Gloeothece citriformis (strain PCC 7424) (Cyanothece sp. (strain PCC 7424)).